A 359-amino-acid polypeptide reads, in one-letter code: Protein RecA (359 aa).

64 to 71 (GHESSGKT) is a binding site for ATP. The segment at 329–359 (KYSNKDSNDSPKEGSKIKTKVNPAVTQDELI) is disordered. The span at 331–344 (SNKDSNDSPKEGSK) shows a compositional bias: basic and acidic residues.

Belongs to the RecA family.

Its subcellular location is the cytoplasm. In terms of biological role, can catalyze the hydrolysis of ATP in the presence of single-stranded DNA, the ATP-dependent uptake of single-stranded DNA by duplex DNA, and the ATP-dependent hybridization of homologous single-stranded DNAs. It interacts with LexA causing its activation and leading to its autocatalytic cleavage. The sequence is that of Protein RecA from Francisella tularensis subsp. tularensis (strain FSC 198).